Reading from the N-terminus, the 554-residue chain is Phospho-2-dehydro-3-deoxyheptonate aldolase 1, chloroplastic (554 aa).

Residues M1–R39 constitute a chloroplast transit peptide. The segment at V41–K70 is disordered.

It belongs to the class-II DAHP synthase family.

The protein resides in the plastid. It localises to the chloroplast. The enzyme catalyses D-erythrose 4-phosphate + phosphoenolpyruvate + H2O = 7-phospho-2-dehydro-3-deoxy-D-arabino-heptonate + phosphate. It functions in the pathway metabolic intermediate biosynthesis; chorismate biosynthesis; chorismate from D-erythrose 4-phosphate and phosphoenolpyruvate: step 1/7. This Oryza sativa subsp. japonica (Rice) protein is Phospho-2-dehydro-3-deoxyheptonate aldolase 1, chloroplastic (DAHPS1).